A 212-amino-acid chain; its full sequence is Sentrin-specific protease 8 (212 aa).

An N-acetylmethionine modification is found at Met1. The interval 11–174 (SLLRQSDVSL…MYVICNTEAL (164 aa)) is protease. Residues His102 and Asp119 contribute to the active site. Cys163 acts as the Nucleophile in catalysis.

This sequence belongs to the peptidase C48 family. In terms of tissue distribution, broadly expressed, with highest levels in kidney and pancreas.

Its function is as follows. Protease that catalyzes two essential functions in the NEDD8 pathway: processing of full-length NEDD8 to its mature form and deconjugation of NEDD8 from targeted proteins such as cullins or p53. This is Sentrin-specific protease 8 (SENP8) from Homo sapiens (Human).